The following is a 358-amino-acid chain: Transcription factor PCF6 (358 aa).

The tract at residues 1–29 is disordered; it reads MEAAVGDGEGGGGGGGRGKRGRGGGGGEM. Over residues 7 to 16 the composition is skewed to gly residues; that stretch reads DGEGGGGGGG. The TCP domain occupies 52–110; sequence GKDRHSKVYTAKGIRDRRVRLSVATAIQFYDLQDRLGFDQPSKAIEWLINAASPAIDTL. Disordered regions lie at residues 127–163 and 282–308; these read ADAA…DKEV and ANRG…QQLQ. 2 stretches are compositionally biased toward polar residues: residues 143–156 and 285–296; these read LSNK…SETS and GTLQSNSPSNMS.

As to quaternary structure, forms homodimers and heterodimers.

It localises to the nucleus. Transcription activator. Binds the promoter core sequence 5'-GGNCC-3'. The polypeptide is Transcription factor PCF6 (PCF6) (Oryza sativa subsp. indica (Rice)).